A 278-amino-acid chain; its full sequence is Neuronal membrane glycoprotein M6-a (278 aa).

The residue at position 1 (Met-1) is an N-acetylmethionine. Residues Met-1–Leu-22 lie on the Cytoplasmic side of the membrane. The helical transmembrane segment at Gly-23–Phe-43 threads the bilayer. Topologically, residues Cys-44–Val-84 are extracellular. The helical transmembrane segment at Ile-85–Phe-105 threads the bilayer. Over Thr-106 to Ser-127 the chain is Cytoplasmic. The chain crosses the membrane as a helical span at residues Ala-128–Thr-148. The Extracellular segment spans residues Ser-149–Leu-213. An N-linked (GlcNAc...) asparagine glycan is attached at Asn-164. The cysteines at positions 174 and 192 are disulfide-linked. N-linked (GlcNAc...) asparagine glycosylation is present at Asn-208. The helical transmembrane segment at Phe-214–Val-234 threads the bilayer. The Cytoplasmic portion of the chain corresponds to Leu-235–Thr-278. A Phosphoserine modification is found at Ser-256. Thr-278 is modified (phosphothreonine).

It belongs to the myelin proteolipid protein family. In terms of assembly, interacts with OPRM1. Interacts with palmitoyltransferase ZDHHC17/HIP14; the interaction leads to palmitoylation of GPM6A. N-glycosylated. Post-translationally, palmitoylated by ZDHHC17/HIP14.

The protein resides in the cell membrane. It is found in the cell projection. Its subcellular location is the axon. The protein localises to the growth cone. It localises to the dendritic spine. The protein resides in the filopodium. It is found in the neuron projection. Its function is as follows. Involved in neuronal differentiation, including differentiation and migration of neuronal stem cells. Plays a role in neuronal plasticity and is involved in neurite and filopodia outgrowth, filopodia motility and probably synapse formation. GPM6A-induced filopodia formation involves mitogen-activated protein kinase (MAPK) and Src signaling pathways. May be involved in neuronal NGF-dependent Ca(2+) influx. May be involved in regulation of endocytosis and intracellular trafficking of G-protein-coupled receptors (GPCRs); may enhance internalization and recycling of mu-type opioid receptor. The chain is Neuronal membrane glycoprotein M6-a (GPM6A) from Bos taurus (Bovine).